A 151-amino-acid chain; its full sequence is Nucleoside diphosphate kinase (151 aa).

Residues K10, F58, R86, T92, R103, and N113 each coordinate ATP. The active-site Pros-phosphohistidine intermediate is H116.

Belongs to the NDK family. In terms of assembly, homotetramer. The cofactor is Mg(2+).

The protein resides in the cytoplasm. It carries out the reaction dZDP + ATP = dZTP + ADP. The catalysed reaction is a 2'-deoxyribonucleoside 5'-diphosphate + ATP = a 2'-deoxyribonucleoside 5'-triphosphate + ADP. The enzyme catalyses a ribonucleoside 5'-diphosphate + ATP = a ribonucleoside 5'-triphosphate + ADP. It participates in purine metabolism. In terms of biological role, major role in the synthesis of nucleoside triphosphates other than ATP. The ATP gamma phosphate is transferred to the NDP beta phosphate via a ping-pong mechanism, using a phosphorylated active-site intermediate. Its function is as follows. (Microbial infection) Catalyzes the phosphorylation of dZDP to dZTP, when the bacterium is infected by a phage that produces the substrate for the synthesis of dZTP (2- amino-2'-deoxyadenosine 5'-triphosphate), which is then used by the phage as a DNA polymerase substrate. In Synechococcus sp. (strain CC9902), this protein is Nucleoside diphosphate kinase.